We begin with the raw amino-acid sequence, 185 residues long: Prenylated Rab acceptor protein 1 (185 aa).

The Cytoplasmic segment spans residues 1–78 (MAAQKDQQKD…RNVEYYQSNY (78 aa)). The required for interaction with prenylated RAB3A and VAMP2 stretch occupies residues 30-54 (AGREWLERRRATIRPWSTFVDQQRF). 2 helical membrane passes run 79–94 (VFVFLGLILYCVVTSP) and 95–112 (MLLVALAVFFGACYILYL). Topologically, residues 113 to 131 (RTLESKLVLFGREVSPAHQ) are cytoplasmic. 2 helical membrane-spanning segments follow: residues 132–148 (YALAGGISFPFFWLAGA) and 149–165 (GSAVFWVLGATLVVIGS). The interval 165–185 (SHAAFHQIEAVDGEELQMEPV) is required for interaction with GDI1. Residues 166-185 (HAAFHQIEAVDGEELQMEPV) are Cytoplasmic-facing. Positions 175–185 (VDGEELQMEPV) are required for interaction with prenylated RAB3A and VAMP2. The interval 175-185 (VDGEELQMEPV) is homodimerization.

It belongs to the PRA1 family. Homodimer. Interacts with VAMP2 (synaptobrevin-2), GDI1, and PCLO. Interacts specifically with prenylated Rab proteins; strongly with RAB4B, RAB5A and RAB5C, and weakly with RAB4A, RAB6, RAB7A, RAB17 and RAB22. Interacts with NDRG1. As to expression, ubiquitous. Strongest expression found in placenta, pituitary gland, kidney, lung and stomach.

It localises to the cell membrane. Its subcellular location is the cytoplasm. The protein localises to the golgi apparatus. The protein resides in the cytoplasmic vesicle. It is found in the secretory vesicle. It localises to the synaptic vesicle. General Rab protein regulator required for vesicle formation from the Golgi complex. May control vesicle docking and fusion by mediating the action of Rab GTPases to the SNARE complexes. In addition it inhibits the removal of Rab GTPases from the membrane by GDI. The sequence is that of Prenylated Rab acceptor protein 1 (RABAC1) from Homo sapiens (Human).